Consider the following 89-residue polypeptide: Small ribosomal subunit protein uS15 (89 aa).

The interval 1 to 24 (MSLNAEQKSEIVEQFRRSPSDTGS) is disordered. A compositionally biased stretch (basic and acidic residues) spans 7–19 (QKSEIVEQFRRSP).

This sequence belongs to the universal ribosomal protein uS15 family. In terms of assembly, part of the 30S ribosomal subunit. Forms a bridge to the 50S subunit in the 70S ribosome, contacting the 23S rRNA.

One of the primary rRNA binding proteins, it binds directly to 16S rRNA where it helps nucleate assembly of the platform of the 30S subunit by binding and bridging several RNA helices of the 16S rRNA. In terms of biological role, forms an intersubunit bridge (bridge B4) with the 23S rRNA of the 50S subunit in the ribosome. The protein is Small ribosomal subunit protein uS15 of Halorhodospira halophila (strain DSM 244 / SL1) (Ectothiorhodospira halophila (strain DSM 244 / SL1)).